Reading from the N-terminus, the 310-residue chain is Transcriptional regulator NRG1 (310 aa).

Positions 85-131 (YYMGPPAQHRLPTPPPYPMSSPTTATAATPLSQQSPHLQPQQTLQQP) are disordered. Residues 104–131 (SSPTTATAATPLSQQSPHLQPQQTLQQP) are compositionally biased toward low complexity. 2 C2H2-type zinc fingers span residues 228–250 (HVCK…NRIH) and 256–280 (HQCP…YKTH).

The protein localises to the nucleus. In terms of biological role, transcriptional repressor that binds NRG1 response elements (NRE) of target promoters. Involved in regulation of chlamydospore formation, hyphal growth, virulence, and stress response. Plays a key role in regulating true hyphal growth, but does not regulate pseudohyphal growth in the same fashion. Directs transcriptional repression of a subset of filament-specific genes such as HWP1, HYR1, ALS8, HWP1, or ECE1; via the TUP1 pathway. Functions with UME6 in a negative feedback loop to control the level and duration of filament-specific gene expression in response to inducing conditions. Plays a key role in biofilm formation and dispersion. Also plays the role of a negative regulator of virulence in mice models. Required for the expression of the cell wall genes RBR1. The chain is Transcriptional regulator NRG1 (NRG1) from Candida albicans (strain SC5314 / ATCC MYA-2876) (Yeast).